The following is a 332-amino-acid chain: Glyceraldehyde-3-phosphate dehydrogenase 1 (332 aa).

Residues Arg11, Ile12, Asp33, and Thr120 each coordinate NAD(+). Residues Ser149–Thr151, Thr180, Thr209–Gly210, and Arg232 each bind D-glyceraldehyde 3-phosphate. Cys150 acts as the Nucleophile in catalysis. The NAD(+) site is built by Asn314 and Tyr318.

This sequence belongs to the glyceraldehyde-3-phosphate dehydrogenase family. Homotetramer.

The protein resides in the cytoplasm. It carries out the reaction D-glyceraldehyde 3-phosphate + phosphate + NAD(+) = (2R)-3-phospho-glyceroyl phosphate + NADH + H(+). It catalyses the reaction NADH + H2O = (6R)-NADHX. The enzyme catalyses NADH + H2O = (6S)-NADHX. The catalysed reaction is NADPH + H2O = (6R)-NADPHX. It carries out the reaction NADPH + H2O = (6S)-NADPHX. The protein operates within carbohydrate degradation; glycolysis; pyruvate from D-glyceraldehyde 3-phosphate: step 1/5. Functionally, glyceraldehyde-3-phosphate dehydrogenase (GAPDH) involved in glycolysis and gluconeogenesis. Catalyzes the reaction of glyceraldehyde-3-phosphate to 1,3 bis-phosphoglycerate. The contribution of the TDH1, TDH2, and TDH3 to the total glyceraldehyde-3-phosphate dehydrogenase activity is 10-15, 25-30, and 50-60%, respectively. May be involved in a process other than glycolysis because it is synthesized by cells in stationary phase. Its function is as follows. As a side activity, catalyzes the hydration of the nicotinamide ring of NADH or NADPH at the C6 position to give the corresponding hydrates, NADHX and NADPHX, which exist as R and S epimers, that cannot act as electron donors or acceptors and inhibit several dehydrogenases, making them toxic. The polypeptide is Glyceraldehyde-3-phosphate dehydrogenase 1 (Saccharomyces cerevisiae (strain ATCC 204508 / S288c) (Baker's yeast)).